The following is a 331-amino-acid chain: MSKVAFLGAGSFGTSLGILLGNKGVTVSLWDRDENVINDINVNRKNDKYIKDLTIPTNVTAYKDLDEALNGAEYVVLAVPSHVIRTACKNLKGKINDDVIIINIAKGIEEGTNLRLSQVINQELPNNKVVVLSGPSHAEEVSKGIPTTLVASSECMECAEKVQDLFMDKNFRIYTNDDIIGVEIGGAVKNIIALAAGVCDGIGYGDNSKAALMTRGMAEIARIGIKMGGKAETFFGLTGMGDLIVTCTSMHSRNRRAGILIGQGKTAEEAIEEVGMVVEGIKACKAFYELKEKEGVTMPITDIAYKVLFEGAKAENAVSLLMERDKKKEEI.

The NADPH site is built by Ser11, Phe12, Arg32, and Lys106. Lys106, Gly134, and Ser136 together coordinate sn-glycerol 3-phosphate. Ala138 provides a ligand contact to NADPH. Sn-glycerol 3-phosphate is bound by residues Lys189, Asp242, Ser252, Arg253, and Asn254. Lys189 acts as the Proton acceptor in catalysis. Arg253 provides a ligand contact to NADPH. NADPH contacts are provided by Val277 and Glu279.

This sequence belongs to the NAD-dependent glycerol-3-phosphate dehydrogenase family.

Its subcellular location is the cytoplasm. The enzyme catalyses sn-glycerol 3-phosphate + NAD(+) = dihydroxyacetone phosphate + NADH + H(+). The catalysed reaction is sn-glycerol 3-phosphate + NADP(+) = dihydroxyacetone phosphate + NADPH + H(+). It functions in the pathway membrane lipid metabolism; glycerophospholipid metabolism. Functionally, catalyzes the reduction of the glycolytic intermediate dihydroxyacetone phosphate (DHAP) to sn-glycerol 3-phosphate (G3P), the key precursor for phospholipid synthesis. The sequence is that of Glycerol-3-phosphate dehydrogenase [NAD(P)+] from Clostridium perfringens (strain ATCC 13124 / DSM 756 / JCM 1290 / NCIMB 6125 / NCTC 8237 / Type A).